The following is a 372-amino-acid chain: Cyclin-J (372 aa).

Residues aspartate 15–cysteine 143 enclose the Cyclin N-terminal domain.

The protein belongs to the cyclin family.

The chain is Cyclin-J (CCNJ) from Homo sapiens (Human).